Consider the following 349-residue polypeptide: Beta-glucanase (349 aa).

Positions 1–27 (MNIKKTAVKSALAVAAAAAALTTNVSA) are cleaved as a signal peptide. Residues 28 to 197 (KDFSGAELYT…WVKVYKYTPG (170 aa)) form the GH16 domain. Glu79 functions as the Nucleophile in the catalytic mechanism. The active-site Proton donor is the Glu83. Residues 258–311 (SFNGQVPRDDEPAPQSSSSAPASSSSVPASSSSVPASSSSAFVPPSSSSATNAI) are disordered. A compositionally biased stretch (low complexity) spans 270–307 (APQSSSSAPASSSSVPASSSSVPASSSSAFVPPSSSSA). Tandem repeats lie at residues 271-277 (PQSSSSA), 278-284 (PASSSSV), 285-291 (PASSSSV), 292-298 (PASSSSA), and 301-307 (PPSSSSA). Positions 271-307 (PQSSSSAPASSSSVPASSSSVPASSSSAFVPPSSSSA) are 5 X 7 AA tandem repeats of P-X-S-S-S-S-X.

Belongs to the glycosyl hydrolase 16 family.

The enzyme catalyses Hydrolysis of (1-&gt;4)-beta-D-glucosidic linkages in beta-D-glucans containing (1-&gt;3)- and (1-&gt;4)-bonds.. This chain is Beta-glucanase, found in Fibrobacter succinogenes (strain ATCC 19169 / S85).